The following is a 478-amino-acid chain: Divinyl ether synthase CYP74D1 (478 aa).

Cysteine 431 contacts heme.

Belongs to the cytochrome P450 family. 9-divinyl ether synthase subfamily. As to expression, expressed in roots. Detected in stems, but not in flower buds, petioles, cotyledons or leaves.

It catalyses the reaction (9S)-hydroperoxy-(10E,12Z)-octadecadienoate = colneleate + H2O. The enzyme catalyses (9S)-hydroperoxy-(10E,12Z,15Z)-octadecatrienoate = colnelenate + H2O. Involved in the biosynthesis of the anti-fungal toxins colneleate and colnelenate. Can use (9S)-hydroperoxy-(10E,12Z)-octadecadienoate (9-HPOD) and (9S)-hydroperoxy-(10E,12Z,15Z)-octadecatrienoate (9-HPOT) as substrates, but has a very low activity with the corresponding 13-hydroperoxides (13-HPOD and 13-POT). The polypeptide is Divinyl ether synthase CYP74D1 (Solanum lycopersicum (Tomato)).